Here is a 399-residue protein sequence, read N- to C-terminus: uncharacterized protein (399 aa).

The next 9 helical transmembrane spans lie at 46-66 (IAPY…FFIV), 76-95 (TLPR…YQTM), 139-159 (GVGY…FWMA), 181-201 (IIII…FWTF), 226-246 (LMLN…TCFF), 262-282 (ILPA…SFIW), 303-323 (VQFS…LAHM), 330-350 (IIQA…INYF), and 352-372 (GTII…SFVH).

This sequence belongs to the CDP-alcohol phosphatidyltransferase class-I family.

It localises to the membrane. This is an uncharacterized protein from Dictyostelium discoideum (Social amoeba).